The primary structure comprises 2515 residues: Probable maltase-glucoamylase 2 (2515 aa).

Residues 1-9 (MARKLSVLE) are Cytoplasmic-facing. A helical transmembrane segment spans residues 10 to 30 (VLLIIFCLIVVTIDILLLLLV). At 31-482 (LEETSDTSFT…DGVWIEMNEV (452 aa)) the chain is on the lumenal side. Residues 41–88 (PECPEIPQSERIDCTPDQEVTEDICRWQYKCCWSPVADANVPRCFFPW) enclose the P-type 1 domain. Intrachain disulfides connect C43–C72, C54–C71, and C65–C84. Residues 152-865 (SHENINLVDG…MDKQPANFIV (714 aa)) are maltase. N167 carries an N-linked (GlcNAc...) asparagine glycan. Y371 carries the sulfotyrosine modification. N421 carries an N-linked (GlcNAc...) asparagine glycan. E478 serves as the catalytic Nucleophile. Residue E481 is part of the active site. Cystine bridges form between C608–C619, C916–C933, and C928–C946. An N-linked (GlcNAc...) asparagine glycan is attached at N613. In terms of domain architecture, P-type 2 spans 904 to 950 (WNLPVSDLEKFNCYPDDPTASEESCRQRGCLWEDTSTPGVPTCYYDT). Positions 1023–1766 (PLNTPPQPVG…GVNTYVTQVS (744 aa)) are glucoamylase. Residue Y1238 is modified to Sulfotyrosine. The active-site Nucleophile is the D1375. Residue E1378 is part of the active site. Disordered regions lie at residues 1816–1901 (TPTK…PITT), 1994–2015 (STTV…STNA), and 2037–2091 (TVPD…SSTT). Residues 1817–1831 (PTKTSTIPMSSHPSP) show a composition bias toward polar residues. The segment covering 1832-1901 (STTNATSSET…STNATVPITT (70 aa)) has biased composition (low complexity). N-linked (GlcNAc...) asparagine glycosylation is present at N2249.

The protein belongs to the glycosyl hydrolase 31 family.

It localises to the membrane. The enzyme catalyses Hydrolysis of terminal (1-&gt;4)-linked alpha-D-glucose residues successively from non-reducing ends of the chains with release of beta-D-glucose.. The sequence is that of Probable maltase-glucoamylase 2 from Homo sapiens (Human).